The chain runs to 915 residues: DNA (cytosine-5)-methyltransferase 3 (915 aa).

The segment covering 1–14 has biased composition (low complexity); the sequence is MAPSSPSSARPTRA. Disordered regions lie at residues 1–107 and 152–171; these read MAPS…AEEQ and HSNW…PEED. Basic and acidic residues predominate over residues 21–30; it reads AMAEEIHQNQ. Residues 42-57 show a composition bias toward basic residues; that stretch reads AKRRRKAASSGKKPKP. A compositionally biased stretch (basic and acidic residues) spans 71–80; it reads KKGETEKTEP. Positions 81–107 are enriched in acidic residues; the sequence is VVDDVCAEEPDEEELAMGEEEAEAEEQ. The region spanning 188–313 is the BAH domain; the sequence is IVYCLGDDVY…VAYSTFANIS (126 aa). The span at 315-328 shows a compositional bias: polar residues; sequence ENGQSGSETASGIS. The disordered stretch occupies residues 315 to 338; it reads ENGQSGSETASGISSDDAGLETSS. An SAM-dependent MTase C5-type domain is found at 345–876; that stretch reads ATLLDLYSGC…YCLGQAYLGE (532 aa). The region spanning 445–508 is the Chromo domain; that stretch reads FVVQKLIGIR…EGRKRKILPL (64 aa). The active site involves Cys-521.

Belongs to the class I-like SAM-binding methyltransferase superfamily. C5-methyltransferase family.

The protein localises to the nucleus. It carries out the reaction a 2'-deoxycytidine in DNA + S-adenosyl-L-methionine = a 5-methyl-2'-deoxycytidine in DNA + S-adenosyl-L-homocysteine + H(+). Functionally, may be involved in the CpXpG methylation and in gene silencing. This chain is DNA (cytosine-5)-methyltransferase 3 (DMT105), found in Zea mays (Maize).